Here is a 462-residue protein sequence, read N- to C-terminus: Toxin CfTX-2 (462 aa).

The signal sequence occupies residues 1–17 (MILVSLLPLLFMTGIAS).

It belongs to the jellyfish toxin family. Type I subfamily. As to quaternary structure, oligomer. Post-translationally, contains disulfide bonds. In terms of tissue distribution, nematocytes.

The protein resides in the secreted. Its subcellular location is the nematocyst. It localises to the target cell membrane. Functionally, may cause profound effects on the cardiovascular system of anesthetized rats (at 25 ug/kg), since the fraction containing this toxin and CfTX-1 produces an initial increase in mean arterial pressure, followed by cardiovascular collapse in all animals within 1 minute of injection. To note, the same fraction does not induce significant change in heart rate. Has weak hemolytic activity. Is lethal to crayfish. Causes cutaneous inflammation in humans. May act as a pore-forming toxin, disrupting normal transmembrane ion concentration gradients in susceptible cells. The chain is Toxin CfTX-2 from Chironex fleckeri (Australian box jellyfish).